Reading from the N-terminus, the 205-residue chain is Retron Vc95 putative HNH endonuclease (205 aa).

Its function is as follows. Putative HNH endonuclease component of antiviral defense system retron Vc95, composed of a non-coding RNA (ncRNA), a reverse transcriptase (RT), a probable ATP-binding protein and this protein. Expression of retron Vc95 confers protection against bacteriophages T2, T4 and T6. At multiplicity of infection (MOI) of 0.02 cultures slow growth when infected with T4 but do not collapse, at MOI 2 cultures enter growth stasis. The polypeptide is Retron Vc95 putative HNH endonuclease (Vibrio cholerae serotype O1 biovar El Tor).